Reading from the N-terminus, the 120-residue chain is NAD(P)H-quinone oxidoreductase subunit 3 (120 aa).

The next 3 membrane-spanning stretches (helical) occupy residues 6-26, 64-84, and 89-109; these read GYDAFLGFLLIAAAVPVLALV, MFALVFVIFDVETVFLYPWAV, and LGLLAFIEALIFIAILLVALA.

The protein belongs to the complex I subunit 3 family. NDH-1 can be composed of about 15 different subunits; different subcomplexes with different compositions have been identified which probably have different functions.

It localises to the cellular thylakoid membrane. It catalyses the reaction a plastoquinone + NADH + (n+1) H(+)(in) = a plastoquinol + NAD(+) + n H(+)(out). The catalysed reaction is a plastoquinone + NADPH + (n+1) H(+)(in) = a plastoquinol + NADP(+) + n H(+)(out). Functionally, NDH-1 shuttles electrons from an unknown electron donor, via FMN and iron-sulfur (Fe-S) centers, to quinones in the respiratory and/or the photosynthetic chain. The immediate electron acceptor for the enzyme in this species is believed to be plastoquinone. Couples the redox reaction to proton translocation, and thus conserves the redox energy in a proton gradient. Cyanobacterial NDH-1 also plays a role in inorganic carbon-concentration. This is NAD(P)H-quinone oxidoreductase subunit 3 from Synechococcus sp. (strain CC9605).